A 767-amino-acid polypeptide reads, in one-letter code: Transducin-like enhancer protein 2 (767 aa).

Residues 1–152 (MYPQGRHPTP…SLLGQQNQLQ (152 aa)) form a q domain region. Positions 153–215 (PLSHAPPVPL…SRVDRAASRS (63 aa)) are GP domain. Residues 198-212 (RVGVDAEGSRVDRAA) are compositionally biased toward basic and acidic residues. Disordered regions lie at residues 198–257 (RVGV…EEDK), 264–283 (VDEDQPSEPPSPVTTPCGKA), and 296–346 (SPAS…SSAS). The tract at residues 216–279 (SSPSPPESLV…SEPPSPVTTP (64 aa)) is ccN domain. Positions 238–242 (KQQRA) match the Nuclear localization signal motif. Serine 253 carries the post-translational modification Phosphoserine; by CK2. Residue serine 274 is modified to Phosphoserine; by CDK1. Threonine 278 bears the Phosphothreonine; by CDK1 mark. Residues 280-447 (CGKAPLCIPA…VAKPAYSFHV (168 aa)) form an SP domain region. The segment covering 296–309 (SPASLASSLGSPLP) has biased composition (low complexity). Serine 306 is modified (phosphoserine). Residues 323 to 346 (TPASRSCGTSPPQDSSTPGPSSAS) are compositionally biased toward polar residues. WD repeat units lie at residues 479 to 517 (AHGEVVCAVTISSSTQHVYTGGKGCVKVWDVGQPGSKTP), 525 to 564 (NRDNYIRSCKLLPDGQSLIVGGEASTLSIWDLAAPTPRIK), 569 to 608 (SSAPACYALAVSPDAKVCFSCCSDGNIVVWDLQNQAMVRQ), 611 to 650 (GHTDGASCIDISDYGTRLWTGGLDNTVRCWDLREGRQLQQ), 693 to 732 (LHESCVLSLKFASCGRWFVSTGKDNLLNAWRTPYGASIFQ), and 734 to 766 (KESSSVLSCDISRNNKYIVTGSGDKKATVYEVV).

The protein belongs to the WD repeat Groucho/TLE family. In terms of assembly, homooligomer and heterooligomer with other family members. Binds LEF1, TCF7, TCF7L1, TCF7L2, UTY, HES1 and HES5. Ubiquitinated by XIAP/BIRC4. Expressed in bone marrow-derived macrophages.

It localises to the nucleus. Transcriptional corepressor that binds to a number of transcription factors. Inhibits the transcriptional activation mediated by CTNNB1 and TCF family members in Wnt signaling. The effects of full-length TLE family members may be modulated by association with dominant-negative AES. The protein is Transducin-like enhancer protein 2 (Tle2) of Mus musculus (Mouse).